Consider the following 158-residue polypeptide: Transcription elongation factor GreA (158 aa).

Residues 4 to 75 (EKTYPMTQEG…TQLENMIRNA (72 aa)) are a coiled coil.

This sequence belongs to the GreA/GreB family.

Its function is as follows. Necessary for efficient RNA polymerase transcription elongation past template-encoded arresting sites. The arresting sites in DNA have the property of trapping a certain fraction of elongating RNA polymerases that pass through, resulting in locked ternary complexes. Cleavage of the nascent transcript by cleavage factors such as GreA or GreB allows the resumption of elongation from the new 3'terminus. GreA releases sequences of 2 to 3 nucleotides. The chain is Transcription elongation factor GreA from Bacillus cereus (strain ATCC 10987 / NRS 248).